The primary structure comprises 344 residues: Phenylalanine--tRNA ligase alpha subunit (344 aa).

Glutamate 259 is a binding site for Mg(2+).

Belongs to the class-II aminoacyl-tRNA synthetase family. Phe-tRNA synthetase alpha subunit type 1 subfamily. In terms of assembly, tetramer of two alpha and two beta subunits. The cofactor is Mg(2+).

The protein localises to the cytoplasm. The enzyme catalyses tRNA(Phe) + L-phenylalanine + ATP = L-phenylalanyl-tRNA(Phe) + AMP + diphosphate + H(+). The sequence is that of Phenylalanine--tRNA ligase alpha subunit from Petrotoga mobilis (strain DSM 10674 / SJ95).